We begin with the raw amino-acid sequence, 283 residues long: Extensin (283 aa).

The signal sequence occupies residues 1-24 (MMGGKAALLLALVAVTLAVVEIQA). The segment at 27–283 (GYGYGGGYPT…PPPPPPPPYY (257 aa)) is disordered. Pro residues predominate over residues 36–45 (TPTPKPPAKG). Over residues 46–69 (PKPEKPPTKGHGHKPEKPPKEHKP) the composition is skewed to basic and acidic residues. Composition is skewed to pro residues over residues 70–264 (TPPT…PTYT) and 272–283 (SSPPPPPPPPYY).

Hydroxylated on proline residues in the S-P-P-P-P repeat. Post-translationally, O-glycosylated on hydroxyprolines.

The protein resides in the secreted. It is found in the primary cell wall. Its function is as follows. Structural component in primary cell wall. The sequence is that of Extensin (HRGP) from Sorghum bicolor (Sorghum).